Consider the following 923-residue polypeptide: Alanine--tRNA ligase (923 aa).

Zn(2+) contacts are provided by His611, His615, Cys714, and His718.

The protein belongs to the class-II aminoacyl-tRNA synthetase family. Zn(2+) is required as a cofactor.

The protein resides in the cytoplasm. The catalysed reaction is tRNA(Ala) + L-alanine + ATP = L-alanyl-tRNA(Ala) + AMP + diphosphate. Catalyzes the attachment of alanine to tRNA(Ala) in a two-step reaction: alanine is first activated by ATP to form Ala-AMP and then transferred to the acceptor end of tRNA(Ala). Also edits incorrectly charged Ser-tRNA(Ala) and Gly-tRNA(Ala) via its editing domain. This Methanosarcina barkeri (strain Fusaro / DSM 804) protein is Alanine--tRNA ligase.